A 202-amino-acid polypeptide reads, in one-letter code: FMN-dependent NADH:quinone oxidoreductase (202 aa).

FMN-binding positions include Ser12 and 21 to 23 (SFS).

This sequence belongs to the azoreductase type 1 family. As to quaternary structure, homodimer. FMN serves as cofactor.

The catalysed reaction is 2 a quinone + NADH + H(+) = 2 a 1,4-benzosemiquinone + NAD(+). It carries out the reaction N,N-dimethyl-1,4-phenylenediamine + anthranilate + 2 NAD(+) = 2-(4-dimethylaminophenyl)diazenylbenzoate + 2 NADH + 2 H(+). In terms of biological role, quinone reductase that provides resistance to thiol-specific stress caused by electrophilic quinones. Its function is as follows. Also exhibits azoreductase activity. Catalyzes the reductive cleavage of the azo bond in aromatic azo compounds to the corresponding amines. This chain is FMN-dependent NADH:quinone oxidoreductase, found in Mycoplasma mobile (strain ATCC 43663 / 163K / NCTC 11711) (Mesomycoplasma mobile).